A 140-amino-acid chain; its full sequence is Organic hydroperoxide resistance protein-like (140 aa).

Belongs to the OsmC/Ohr family.

In Mycoplasma pneumoniae (strain ATCC 29342 / M129 / Subtype 1) (Mycoplasmoides pneumoniae), this protein is Organic hydroperoxide resistance protein-like.